Reading from the N-terminus, the 503-residue chain is Probable apyrase 4 (503 aa).

Positions 1 to 14 (MQRSNARSRSNINS) are enriched in low complexity. The segment at 1-39 (MQRSNARSRSNINSDMVDPPEVQTSPGNHRSSPSTAAKP) is disordered. Topologically, residues 1–45 (MQRSNARSRSNINSDMVDPPEVQTSPGNHRSSPSTAAKPKSKRTK) are cytoplasmic. The helical; Signal-anchor for type II membrane protein transmembrane segment at 46–66 (SIIFVIVACVTIALGLLFIGY) threads the bilayer. The Extracellular portion of the chain corresponds to 67–503 (SILRSGRNRR…DLSNVAKYKI (437 aa)). Residue 83–93 (VIIDGGSSGTR) participates in ATP binding. Glutamate 206 serves as the catalytic Proton acceptor. Residue 230-240 (GIVELGGASAQ) coordinates ATP. Residues asparagine 261, asparagine 293, and asparagine 338 are each glycosylated (N-linked (GlcNAc...) asparagine).

Belongs to the GDA1/CD39 NTPase family. The cofactor is Ca(2+). Expressed both in the primary root and lateral root but not in the rosette leaves.

The protein resides in the membrane. The catalysed reaction is a ribonucleoside 5'-triphosphate + 2 H2O = a ribonucleoside 5'-phosphate + 2 phosphate + 2 H(+). Catalyzes the hydrolysis of phosphoanhydride bonds of nucleoside tri- and di-phosphates. The sequence is that of Probable apyrase 4 (APY4) from Arabidopsis thaliana (Mouse-ear cress).